Reading from the N-terminus, the 159-residue chain is Bacterial non-heme ferritin (159 aa).

One can recognise a Ferritin-like diiron domain in the interval 1-145; sequence MISEKLQNAI…GIVDKIKRAG (145 aa). Residues Glu-17, Glu-50, His-53, Glu-94, and Gln-127 each coordinate Fe cation.

Belongs to the ferritin family. Prokaryotic subfamily. In terms of assembly, homooligomer of 24 subunits that assemble into a spherical protein shell (12 +/- 1 nM diameter) that can sequester at least 2000 iron atoms.

It catalyses the reaction 4 Fe(2+) + O2 + 6 H2O = 4 iron(III) oxide-hydroxide + 12 H(+). May alleviate iron toxicity in the presence of oxygen. This is Bacterial non-heme ferritin (ftnA) from Bacteroides fragilis (strain 638R).